The sequence spans 233 residues: Short chain dehydrogenase trt9 (233 aa).

Positions 33, 95, 127, 131, and 160 each coordinate NADP(+). The active-site Proton donor is Tyr127. Lys131 (lowers pKa of active site Tyr) is an active-site residue.

It belongs to the short-chain dehydrogenases/reductases (SDR) family.

It functions in the pathway secondary metabolite biosynthesis; terpenoid biosynthesis. Its function is as follows. Short chain dehydrogenase; part of the gene cluster that mediates the biosynthesis of terretonin, a fungal meroterpenoid that acts as a mycotoxin. The first step of the pathway is the synthesis of 3,5-dimethylorsellinic acid (DMOA) by the polyketide synthase trt4. DMOA is then prenylated into farnesyl-DMOA by the polyprenyl transferase trt2. Methylation by the methyltransferase trt5 then leads to farnesyl-DMOA methyl ester which is further subject to epoxidation by the FAD-dependent monooxygenase trt8 to yield epoxyfarnesyl-DMOA methyl ester. Cyclization of epoxyfarnesyl-DMOA methyl ester by the terpene cyclase trt1 leads to a tetracycle intermediate which is in turn converted to preterretonin. Dehydrogenase trt9 comes next to transform preterretonin to preterrenoid. The FAD-dependent monooxygenase trt3 is then required for the C-hydroxylation at C16 of preterrenoid to yield terrenoid. The cytochrome P450 trt6 catalyzes three successive oxidations to transform terrenoid into an unstable intermediate, which then undergoes the D-ring expansion and unusual rearrangement of the methoxy group to afford the core skeleton of terretonin. Trt14 catalyzes the D-ring expansion of terretonin involving intramolecular methoxy rearrangement as well as the hydrolysis of the expanded D-ring and the methyl ester moiety. Finally, the nonheme iron-dependent dioxygenase trt7 accomplishes the last two oxidation reactions steps to complete the biosynthesis of terretonin. Terretonin C is produced via spontaneous decarboxylation of the terretonin precursor. Another shunt product of the terretonin biosynthesis is dihydrofarnesyl-DMOA, derived from epoxyfarnesyl-DMOA through hydrolysis of the epoxide. The sequence is that of Short chain dehydrogenase trt9 from Aspergillus terreus (strain NIH 2624 / FGSC A1156).